Consider the following 411-residue polypeptide: Proline-responsive transcriptional activator PutR (411 aa).

Belongs to the CdaR family.

Functionally, activates transcription of the putBCP operon. Requires proline as a coactivator. The sequence is that of Proline-responsive transcriptional activator PutR from Bacillus subtilis (strain 168).